The following is a 323-amino-acid chain: Zinc finger protein 784 (323 aa).

A disordered region spans residues 1–26; the sequence is MAAARPEAQSRSSPTPESRSQEPLDL. The span at 9-18 shows a compositional bias: polar residues; that stretch reads QSRSSPTPES. S13 is subject to Phosphoserine. 6 C2H2-type zinc fingers span residues 65–87, 101–123, 129–151, 196–218, 224–246, and 252–274; these read FHCALCPAAFRLVSELLFHEHGH, SRCHVCGHSCPGPASLRAHYSLH, YRCALCPRAFKALAPLLRHQHRH, FACRFCAKPFRRSSDMRDHERVH, YHCGICGKGFTQSSVLSGHARIH, and FRCTLCDRTFNNSSNFRKHQRTH. Residues 269–323 are disordered; it reads KHQRTHFHGPGPGLGDSGGQLGSSAAEGSGSGCGVGDPAEEGRGETAKVKVEADQ. Positions 278 to 289 are enriched in gly residues; sequence PGPGLGDSGGQL. Residues 308–323 are compositionally biased toward basic and acidic residues; that stretch reads EEGRGETAKVKVEADQ. Residue K318 forms a Glycyl lysine isopeptide (Lys-Gly) (interchain with G-Cter in SUMO2) linkage.

This sequence belongs to the krueppel C2H2-type zinc-finger protein family.

It is found in the nucleus. May be involved in transcriptional regulation. The polypeptide is Zinc finger protein 784 (ZNF784) (Homo sapiens (Human)).